The sequence spans 365 residues: MKTIELFKFMISAKSQTPDDGGLLDFIQNYLDDFEAIRVDVEGVKNLFLYKKFSQGDHLCFAGHVDVVPAGDGWDSDPYIATERDGYIYGRGAQDMKSGVAAFVQAIKDTKHFNGTLSLLLTSDEEGEGTYGTIEVLNYLRDKSMLPDFAVVAEPTCEMVFGDAIKVGRRGSINGYITLRGKQGHAAYPEKSINPINLIAPKLANMAGVDLDNGDEFFSPSKFVITDIRAGMQVTNVTPNELKMMFNVRNTTLTSQKEIREFVEKNLEDLDYDLRLTQGSYPFKTDTKTKLVKNIDASIEQISGIKPKHSTAGGTSDARHMAPLGIDVIEFGVINDTIHAINERTTKDEVKKLYEVFKHLIDTWK.

Residue His-64 coordinates Zn(2+). The active site involves Asp-66. Asp-95 is a binding site for Zn(2+). Glu-125 functions as the Proton acceptor in the catalytic mechanism. 3 residues coordinate Zn(2+): Glu-126, Glu-154, and His-339.

The protein belongs to the peptidase M20A family. DapE subfamily. In terms of assembly, homodimer. It depends on Zn(2+) as a cofactor. The cofactor is Co(2+).

It catalyses the reaction N-succinyl-(2S,6S)-2,6-diaminopimelate + H2O = (2S,6S)-2,6-diaminopimelate + succinate. The protein operates within amino-acid biosynthesis; L-lysine biosynthesis via DAP pathway; LL-2,6-diaminopimelate from (S)-tetrahydrodipicolinate (succinylase route): step 3/3. Catalyzes the hydrolysis of N-succinyl-L,L-diaminopimelic acid (SDAP), forming succinate and LL-2,6-diaminopimelate (DAP), an intermediate involved in the bacterial biosynthesis of lysine and meso-diaminopimelic acid, an essential component of bacterial cell walls. The sequence is that of Succinyl-diaminopimelate desuccinylase from Sulfurimonas denitrificans (strain ATCC 33889 / DSM 1251) (Thiomicrospira denitrificans (strain ATCC 33889 / DSM 1251)).